A 490-amino-acid polypeptide reads, in one-letter code: Betaine aldehyde dehydrogenase (490 aa).

K(+)-binding residues include Thr-26, Ile-27, and Asp-93. Position 150–152 (150–152 (GAW)) interacts with NAD(+). The active-site Charge relay system is the Lys-162. 176–179 (KPSE) serves as a coordination point for NAD(+). Val-180 lines the K(+) pocket. 230 to 233 (GVAS) provides a ligand contact to NAD(+). Leu-246 serves as a coordination point for K(+). Glu-252 serves as the catalytic Proton acceptor. 3 residues coordinate NAD(+): Gly-254, Cys-286, and Glu-387. The active-site Nucleophile is the Cys-286. Cys-286 is subject to Cysteine sulfenic acid (-SOH). K(+) is bound by residues Lys-457 and Gly-460. Glu-464 (charge relay system) is an active-site residue.

This sequence belongs to the aldehyde dehydrogenase family. In terms of assembly, dimer of dimers. K(+) is required as a cofactor.

It catalyses the reaction betaine aldehyde + NAD(+) + H2O = glycine betaine + NADH + 2 H(+). The protein operates within amine and polyamine biosynthesis; betaine biosynthesis via choline pathway; betaine from betaine aldehyde: step 1/1. Its function is as follows. Involved in the biosynthesis of the osmoprotectant glycine betaine. Catalyzes the irreversible oxidation of betaine aldehyde to the corresponding acid. The polypeptide is Betaine aldehyde dehydrogenase (Escherichia coli (strain SMS-3-5 / SECEC)).